The primary structure comprises 284 residues: Polyamine aminopropyltransferase (284 aa).

A PABS domain is found at 2–237 (ELWYTEKHTE…GHWLFGFASK (236 aa)). Q31 serves as a coordination point for S-methyl-5'-thioadenosine. Spermidine-binding residues include H62 and D86. Residues E106 and 137–138 (DG) contribute to the S-methyl-5'-thioadenosine site. D155 acts as the Proton acceptor in catalysis. 155 to 158 (DSTD) is a spermidine binding site. P162 serves as a coordination point for S-methyl-5'-thioadenosine.

Belongs to the spermidine/spermine synthase family. As to quaternary structure, homodimer or homotetramer.

It is found in the cytoplasm. It carries out the reaction S-adenosyl 3-(methylsulfanyl)propylamine + putrescine = S-methyl-5'-thioadenosine + spermidine + H(+). Its pathway is amine and polyamine biosynthesis; spermidine biosynthesis; spermidine from putrescine: step 1/1. In terms of biological role, catalyzes the irreversible transfer of a propylamine group from the amino donor S-adenosylmethioninamine (decarboxy-AdoMet) to putrescine (1,4-diaminobutane) to yield spermidine. The polypeptide is Polyamine aminopropyltransferase (Clostridium botulinum (strain Alaska E43 / Type E3)).